Here is a 175-residue protein sequence, read N- to C-terminus: Peptide deformylase (175 aa).

Cys-96 and His-138 together coordinate Fe cation. Glu-139 is a catalytic residue. His-142 lines the Fe cation pocket.

Belongs to the polypeptide deformylase family. Fe(2+) serves as cofactor.

The catalysed reaction is N-terminal N-formyl-L-methionyl-[peptide] + H2O = N-terminal L-methionyl-[peptide] + formate. Its function is as follows. Removes the formyl group from the N-terminal Met of newly synthesized proteins. Requires at least a dipeptide for an efficient rate of reaction. N-terminal L-methionine is a prerequisite for activity but the enzyme has broad specificity at other positions. In Helicobacter acinonychis (strain Sheeba), this protein is Peptide deformylase.